The sequence spans 334 residues: Ribonucleoside-diphosphate reductase small chain (334 aa).

3 residues coordinate Fe cation: D77, E108, and H111. Y115 is an active-site residue. Fe cation-binding residues include E171, E205, and H208.

It belongs to the ribonucleoside diphosphate reductase small chain family. Heterotetramer composed of a homodimer of the large subunit (R1) and a homodimer of the small subunit (R2). Larger multisubunit protein complex are also active, composed of (R1)n(R2)n. Fe cation serves as cofactor.

The enzyme catalyses a 2'-deoxyribonucleoside 5'-diphosphate + [thioredoxin]-disulfide + H2O = a ribonucleoside 5'-diphosphate + [thioredoxin]-dithiol. Functionally, ribonucleoside-diphosphate reductase holoenzyme provides the precursors necessary for viral DNA synthesis. Allows virus growth in non-dividing cells. Catalyzes the biosynthesis of deoxyribonucleotides from the corresponding ribonucleotides. The protein is Ribonucleoside-diphosphate reductase small chain of Ornithodoros (relapsing fever ticks).